A 470-amino-acid chain; its full sequence is Sulfate adenylyltransferase subunit 1 (470 aa).

The tr-type G domain occupies 22-238; sequence KELLRFITCG…ETIKIDYAYT (217 aa). The G1 stretch occupies residues 31-38; sequence GSVDDGKS. 31-38 contributes to the GTP binding site; sequence GSVDDGKS. Residues 89–93 form a G2 region; sequence GITID. The tract at residues 110-113 is G3; sequence DTPG. Residues 110 to 114 and 165 to 168 contribute to the GTP site; these read DTPGH and NKMD. The tract at residues 165-168 is G4; it reads NKMD. Residues 202–204 form a G5 region; that stretch reads SAL.

It belongs to the TRAFAC class translation factor GTPase superfamily. Classic translation factor GTPase family. CysN/NodQ subfamily. In terms of assembly, heterodimer composed of CysD, the smaller subunit, and CysN.

It carries out the reaction sulfate + ATP + H(+) = adenosine 5'-phosphosulfate + diphosphate. The protein operates within sulfur metabolism; hydrogen sulfide biosynthesis; sulfite from sulfate: step 1/3. In terms of biological role, with CysD forms the ATP sulfurylase (ATPS) that catalyzes the adenylation of sulfate producing adenosine 5'-phosphosulfate (APS) and diphosphate, the first enzymatic step in sulfur assimilation pathway. APS synthesis involves the formation of a high-energy phosphoric-sulfuric acid anhydride bond driven by GTP hydrolysis by CysN coupled to ATP hydrolysis by CysD. This chain is Sulfate adenylyltransferase subunit 1, found in Francisella tularensis subsp. tularensis (strain SCHU S4 / Schu 4).